Consider the following 333-residue polypeptide: uncharacterized protein (333 aa).

The N-terminal stretch at 1-16 (MRPFLMILSVTYIASA) is a signal peptide. Residue Asn-204 is glycosylated (N-linked (GlcNAc...) asparagine).

This is an uncharacterized protein from Encephalitozoon cuniculi (strain GB-M1) (Microsporidian parasite).